An 88-amino-acid chain; its full sequence is Small ribosomal subunit protein bS20 (88 aa).

Basic and acidic residues predominate over residues Met-1–Arg-17. The segment at Met-1–Lys-25 is disordered.

The protein belongs to the bacterial ribosomal protein bS20 family.

In terms of biological role, binds directly to 16S ribosomal RNA. The sequence is that of Small ribosomal subunit protein bS20 from Mycoplasma genitalium (strain ATCC 33530 / DSM 19775 / NCTC 10195 / G37) (Mycoplasmoides genitalium).